A 32-amino-acid chain; its full sequence is Cytochrome b6-f complex subunit 7 (32 aa).

The helical transmembrane segment at 9–27 (AVLSSVLVLVGLAIGFLLL) threads the bilayer.

This sequence belongs to the PetM family. As to quaternary structure, the 4 large subunits of the cytochrome b6-f complex are cytochrome b6, subunit IV (17 kDa polypeptide, PetD), cytochrome f and the Rieske protein, while the 4 small subunits are PetG, PetL, PetM and PetN. The complex functions as a dimer.

It is found in the plastid. Its subcellular location is the chloroplast thylakoid membrane. Component of the cytochrome b6-f complex, which mediates electron transfer between photosystem II (PSII) and photosystem I (PSI), cyclic electron flow around PSI, and state transitions. The sequence is that of Cytochrome b6-f complex subunit 7 from Pyropia yezoensis (Susabi-nori).